Here is a 91-residue protein sequence, read N- to C-terminus: Small ribosomal subunit protein bS18 (91 aa).

It belongs to the bacterial ribosomal protein bS18 family. As to quaternary structure, part of the 30S ribosomal subunit. Forms a tight heterodimer with protein bS6.

Functionally, binds as a heterodimer with protein bS6 to the central domain of the 16S rRNA, where it helps stabilize the platform of the 30S subunit. The chain is Small ribosomal subunit protein bS18 from Burkholderia ambifaria (strain MC40-6).